A 236-amino-acid chain; its full sequence is Rab-like protein 3 (236 aa).

Residues 1–236 (MASLDRVKVL…GGTLKSLHYD (236 aa)) are small GTPase-like. GTP contacts are provided by residues 16–21 (GVGKSS), 148–150 (KLD), and 179–180 (DC).

Belongs to the small GTPase superfamily. Rab family. Homodimer. Interacts with GPR89; the interaction stabilizes GPR89. Interacts with RAP1GDS1.

Functionally, required for KRAS signaling regulation and modulation of cell proliferation. Regulator of KRAS prenylation, and probably prenylation of other small GTPases. Required for lymphocyte development and function. Not required for myeloid cell development. The polypeptide is Rab-like protein 3 (RABL3) (Bos taurus (Bovine)).